Consider the following 589-residue polypeptide: Kelch-like protein 25 (589 aa).

A BTB domain is found at Thr-46–Glu-114. In terms of domain architecture, BACK spans Cys-149–Val-250. Kelch repeat units follow at residues Thr-296–Cys-340, Lys-341–Asn-388, Cys-389–Leu-444, Leu-446–Ser-492, Gln-493–Asn-538, and Lys-539–Lys-585.

In terms of assembly, component of the BCR(KLHL25) E3 ubiquitin ligase complex, at least composed of cul3, klhl25 and rbx1.

The protein operates within protein modification; protein ubiquitination. Its function is as follows. Substrate-specific adapter of a BCR (BTB-CUL3-RBX1) E3 ubiquitin ligase complex involved in various processes, such as translation homeostasis and lipid synthesis. The BCR(KLHL25) ubiquitin ligase complex acts by mediating ubiquitination of hypophosphorylated eif4ebp1 (4E-BP1): ubiquitination and subsequent degradation of hypophosphorylated EIF4EBP1 (4E-BP1) probably serves as a homeostatic mechanism to maintain translation and prevent eIF4E inhibition when eIF4E levels are low. The BCR(KLHL25) complex also acts as a regulator of lipid synthesis by mediating ubiquitination and degradation of ACLY, thereby inhibiting lipid synthesis. The protein is Kelch-like protein 25 of Xenopus tropicalis (Western clawed frog).